The sequence spans 395 residues: ATP synthase subunit beta, chloroplastic (395 aa).

Position 72–79 (72–79) interacts with ATP; sequence GGAGVGKT.

Belongs to the ATPase alpha/beta chains family. F-type ATPases have 2 components, CF(1) - the catalytic core - and CF(0) - the membrane proton channel. CF(1) has five subunits: alpha(3), beta(3), gamma(1), delta(1), epsilon(1). CF(0) has four main subunits: a(1), b(1), b'(1) and c(9-12).

The protein resides in the plastid. The protein localises to the chloroplast thylakoid membrane. The enzyme catalyses ATP + H2O + 4 H(+)(in) = ADP + phosphate + 5 H(+)(out). Its function is as follows. Produces ATP from ADP in the presence of a proton gradient across the membrane. The catalytic sites are hosted primarily by the beta subunits. This Blechnum occidentale (Hammock fern) protein is ATP synthase subunit beta, chloroplastic.